Reading from the N-terminus, the 217-residue chain is Probable transaldolase (217 aa).

The active-site Schiff-base intermediate with substrate is the Lys83.

It belongs to the transaldolase family. Type 3B subfamily.

The protein localises to the cytoplasm. The enzyme catalyses D-sedoheptulose 7-phosphate + D-glyceraldehyde 3-phosphate = D-erythrose 4-phosphate + beta-D-fructose 6-phosphate. The protein operates within carbohydrate degradation; pentose phosphate pathway; D-glyceraldehyde 3-phosphate and beta-D-fructose 6-phosphate from D-ribose 5-phosphate and D-xylulose 5-phosphate (non-oxidative stage): step 2/3. In terms of biological role, transaldolase is important for the balance of metabolites in the pentose-phosphate pathway. This Brucella melitensis biotype 1 (strain ATCC 23456 / CCUG 17765 / NCTC 10094 / 16M) protein is Probable transaldolase.